The following is a 360-amino-acid chain: Protein Wnt-2 (360 aa).

Residues 1–25 (MNAPLGGIWLGLPLLLTWLSPEVSS) form the signal peptide. 11 cysteine pairs are disulfide-bonded: cysteine 76/cysteine 87, cysteine 127/cysteine 135, cysteine 137/cysteine 157, cysteine 206/cysteine 220, cysteine 208/cysteine 215, cysteine 278/cysteine 309, cysteine 294/cysteine 304, cysteine 308/cysteine 348, cysteine 324/cysteine 339, cysteine 326/cysteine 336, and cysteine 331/cysteine 332. The O-palmitoleoyl serine; by PORCN moiety is linked to residue serine 212. Asparagine 295 carries an N-linked (GlcNAc...) asparagine glycan.

It belongs to the Wnt family. Post-translationally, palmitoleoylation is required for efficient binding to frizzled receptors. Depalmitoleoylation leads to Wnt signaling pathway inhibition.

It localises to the secreted. Its subcellular location is the extracellular space. The protein resides in the extracellular matrix. Functionally, ligand for members of the frizzled family of seven transmembrane receptors. Probable developmental protein. May be a signaling molecule which affects the development of discrete regions of tissues. Is likely to signal over only few cell diameters. This is Protein Wnt-2 (WNT2) from Oryctolagus cuniculus (Rabbit).